The sequence spans 380 residues: Cytochrome b (380 aa).

A run of 4 helical transmembrane segments spans residues 34 to 54 (FGSL…LLAM), 78 to 99 (WLIR…YMHI), 114 to 134 (WNTG…GYVL), and 179 to 199 (FFAL…IHLT). Heme b is bound by residues His84 and His98. Positions 183 and 197 each coordinate heme b. His202 lines the a ubiquinone pocket. The next 4 helical transmembrane spans lie at 227–247 (LKDI…ALFT), 289–309 (LGGV…PLLH), 321–341 (LSQS…WVGS), and 348–368 (FIII…ILLP).

Belongs to the cytochrome b family. The cytochrome bc1 complex contains 11 subunits: 3 respiratory subunits (MT-CYB, CYC1 and UQCRFS1), 2 core proteins (UQCRC1 and UQCRC2) and 6 low-molecular weight proteins (UQCRH/QCR6, UQCRB/QCR7, UQCRQ/QCR8, UQCR10/QCR9, UQCR11/QCR10 and a cleavage product of UQCRFS1). This cytochrome bc1 complex then forms a dimer. Heme b serves as cofactor.

It is found in the mitochondrion inner membrane. Component of the ubiquinol-cytochrome c reductase complex (complex III or cytochrome b-c1 complex) that is part of the mitochondrial respiratory chain. The b-c1 complex mediates electron transfer from ubiquinol to cytochrome c. Contributes to the generation of a proton gradient across the mitochondrial membrane that is then used for ATP synthesis. In Falco peregrinus (Peregrine falcon), this protein is Cytochrome b (MT-CYB).